We begin with the raw amino-acid sequence, 129 residues long: UPF0102 protein Mrad2831_2938 (129 aa).

The protein belongs to the UPF0102 family.

The sequence is that of UPF0102 protein Mrad2831_2938 from Methylobacterium radiotolerans (strain ATCC 27329 / DSM 1819 / JCM 2831 / NBRC 15690 / NCIMB 10815 / 0-1).